A 662-amino-acid chain; its full sequence is Histone-lysine N-methyltransferase SET9 (662 aa).

The SET domain maps to 114-228; that stretch reads CPFEVTTTNR…EGDEITVSYG (115 aa). 2 disordered regions span residues 252-418 and 627-662; these read WAPM…DEHH and ESIR…RKTM. Positions 260 to 271 are enriched in acidic residues; sequence DSDDEDMEEAES. A compositionally biased stretch (low complexity) spans 279-289; the sequence is ATSSGTATSGG. Residues 323-333 show a composition bias toward basic and acidic residues; it reads RASDHLREATL. Polar residues-rich tracts occupy residues 356–370, 382–395, and 402–411; these read ANIN…QDIR, LDET…TPQS, and PKSSHSTDAT. A compositionally biased stretch (basic and acidic residues) spans 627–640; that stretch reads ESIRERFSTPRSGR. Positions 653–662 are enriched in basic residues; that stretch reads RKRRRVRKTM.

Belongs to the class V-like SAM-binding methyltransferase superfamily. Histone-lysine methyltransferase family. Suvar4-20 subfamily.

The protein localises to the nucleus. Its subcellular location is the chromosome. The enzyme catalyses L-lysyl(20)-[histone H4] + 3 S-adenosyl-L-methionine = N(6),N(6),N(6)-trimethyl-L-lysyl(20)-[histone H4] + 3 S-adenosyl-L-homocysteine + 3 H(+). Its function is as follows. Histone methyltransferase that trimethylates 'Lys-20' of histone H4 to form H4K20me3. This Phaeosphaeria nodorum (strain SN15 / ATCC MYA-4574 / FGSC 10173) (Glume blotch fungus) protein is Histone-lysine N-methyltransferase SET9 (SET9).